A 437-amino-acid chain; its full sequence is Eukaryotic peptide chain release factor subunit 1 (437 aa).

At Gln-182 the chain carries N5-methylglutamine. Lys-331 participates in a covalent cross-link: Glycyl lysine isopeptide (Lys-Gly) (interchain with G-Cter in ubiquitin). Residue Ser-421 is modified to Phosphoserine.

It belongs to the eukaryotic release factor 1 family. Component of the eRF1-eRF3-GTP ternary complex, composed of SUP45/eRF1, SUP35/eRF3 and GTP. Interacts with TPA1. N5-methylated on Gln-182 by MTQ2.

It is found in the cytoplasm. Component of the eRF1-eRF3-GTP ternary complex, a ternary complex that mediates translation termination in response to the termination codons. The eRF1-eRF3-GTP complex binds to a stop codon in the ribosomal A-site. SUP45/eRF1 is responsible for stop codon recognition and inducing hydrolysis of peptidyl-tRNA. Following GTP hydrolysis by SUP35/eRF3, SUP35/eRF3 dissociates, permitting SUP45/eRF1 to accommodate fully in the A-site and mediate hydrolysis of peptidyl-tRNA. The sequence is that of Eukaryotic peptide chain release factor subunit 1 (SUP45) from Saccharomyces cerevisiae (strain ATCC 204508 / S288c) (Baker's yeast).